The primary structure comprises 241 residues: RxLR effector protein SFI5 (241 aa).

The signal sequence occupies residues Met-1–Ser-20. Residues Arg-44–Arg-62 carry the RxLR-dEER motif.

The protein belongs to the RxLR effector family.

The protein resides in the secreted. It is found in the host cell membrane. Functionally, effector that suppresses flg22-induced post-translational MAP kinase activation in tomato but not in Arabidopsis. The perception of highly conserved pathogen- or microbe-associated molecular patterns (PAMPs/MAMPs), such as flg22, triggers converging signaling pathways recruiting MAP kinase cascades and inducing transcriptional re-programming, yielding a generic antimicrobial response. This Phytophthora infestans (strain T30-4) (Potato late blight agent) protein is RxLR effector protein SFI5.